The following is a 535-amino-acid chain: 2-isopropylmalate synthase (535 aa).

Positions 13 to 274 (VLIFDTTLRD…YFNPFLGRPP (262 aa)) constitute a Pyruvate carboxyltransferase domain. Residues Asp22, His213, His215, and Asn249 each coordinate Mn(2+). Residues 414–535 (QLEFVQVSCG…LEQRALHPQA (122 aa)) are regulatory domain.

It belongs to the alpha-IPM synthase/homocitrate synthase family. LeuA type 1 subfamily. Homodimer. Mn(2+) is required as a cofactor.

It localises to the cytoplasm. It carries out the reaction 3-methyl-2-oxobutanoate + acetyl-CoA + H2O = (2S)-2-isopropylmalate + CoA + H(+). The protein operates within amino-acid biosynthesis; L-leucine biosynthesis; L-leucine from 3-methyl-2-oxobutanoate: step 1/4. Its function is as follows. Catalyzes the condensation of the acetyl group of acetyl-CoA with 3-methyl-2-oxobutanoate (2-ketoisovalerate) to form 3-carboxy-3-hydroxy-4-methylpentanoate (2-isopropylmalate). This is 2-isopropylmalate synthase from Thermosynechococcus vestitus (strain NIES-2133 / IAM M-273 / BP-1).